We begin with the raw amino-acid sequence, 122 residues long: Autophagy-related protein 8e (122 aa).

Gly118 carries the Phosphatidylethanolamine amidated glycine lipid modification. Residues Ala119 to Ile122 constitute a propeptide, removed in mature form.

The protein belongs to the ATG8 family. Interacts with ATG4. Interacts with SH3P2. Interacts with ATG1A and ATG11. Binds to ATG1A and ATG11 on autophagic vesicles. In terms of processing, the C-terminal 4 residues are removed by ATG4 to expose Gly-118 at the C-terminus. This Gly-118 forms then a thioester bond with the 'Cys-558' of ATG7 (E1-like activating enzyme) before being transferred to the 'Cys-258' of ATG3 (the specific E2 conjugating enzyme), in order to be finally amidated with phosphatidylethanolamine. This lipid modification anchors ATG8 to autophagosomes. In terms of tissue distribution, constitutively expressed.

The protein localises to the cytoplasmic vesicle. The protein resides in the autophagosome membrane. Its subcellular location is the vacuole membrane. It localises to the cytoplasm. It is found in the cytoskeleton. In terms of biological role, ubiquitin-like modifier involved in autophagosomes formation. May mediate the delivery of the autophagosomes to the vacuole via the microtubule cytoskeleton. The protein is Autophagy-related protein 8e (ATG8E) of Arabidopsis thaliana (Mouse-ear cress).